The following is a 428-amino-acid chain: D-amino acid dehydrogenase (428 aa).

Position 3–17 (3–17) interacts with FAD; sequence VVVLGSGVVGVTSAY.

Belongs to the DadA oxidoreductase family. FAD is required as a cofactor.

The catalysed reaction is a D-alpha-amino acid + A + H2O = a 2-oxocarboxylate + AH2 + NH4(+). It participates in amino-acid degradation; D-alanine degradation; NH(3) and pyruvate from D-alanine: step 1/1. Functionally, oxidative deamination of D-amino acids. The polypeptide is D-amino acid dehydrogenase (Paraburkholderia phytofirmans (strain DSM 17436 / LMG 22146 / PsJN) (Burkholderia phytofirmans)).